The primary structure comprises 102 residues: Glutaredoxin 1 (102 aa).

The 96-residue stretch at 1 to 96 (MNKAILHTII…KLLEGQPKKK (96 aa)) folds into the Glutaredoxin domain. Residues Cys-17 and Cys-20 are joined by a disulfide bond.

Belongs to the glutaredoxin family. Monomer.

It is found in the cytoplasm. Functionally, has a glutathione-disulfide oxidoreductase activity in the presence of NADPH and glutathione reductase. Reduces low molecular weight disulfides and proteins. The sequence is that of Glutaredoxin 1 (grxC1) from Rickettsia felis (strain ATCC VR-1525 / URRWXCal2) (Rickettsia azadi).